A 181-amino-acid chain; its full sequence is MPLLNTLATPYADALLQVGESRKQSDALADEAKALLSAWSSSQDLQDAMRSPVLSVEGKKKALDSLFSESISPAMLNLLKLLADRQRIGMLDAVLERFLELYRELRGITLAYVTSATALSEQQQDKLTEKVKTVAGTTAVDIDLSVDPDLIGGFVVRLGSQVIDASLRGQVRQLGLSLARA.

Belongs to the ATPase delta chain family. F-type ATPases have 2 components, F(1) - the catalytic core - and F(0) - the membrane proton channel. F(1) has five subunits: alpha(3), beta(3), gamma(1), delta(1), epsilon(1). CF(0) has four main subunits: a(1), b(1), b'(1) and c(10-14). The alpha and beta chains form an alternating ring which encloses part of the gamma chain. F(1) is attached to F(0) by a central stalk formed by the gamma and epsilon chains, while a peripheral stalk is formed by the delta, b and b' chains.

It is found in the cellular thylakoid membrane. Its function is as follows. F(1)F(0) ATP synthase produces ATP from ADP in the presence of a proton or sodium gradient. F-type ATPases consist of two structural domains, F(1) containing the extramembraneous catalytic core and F(0) containing the membrane proton channel, linked together by a central stalk and a peripheral stalk. During catalysis, ATP synthesis in the catalytic domain of F(1) is coupled via a rotary mechanism of the central stalk subunits to proton translocation. This protein is part of the stalk that links CF(0) to CF(1). It either transmits conformational changes from CF(0) to CF(1) or is implicated in proton conduction. The protein is ATP synthase subunit delta of Synechococcus sp. (strain RCC307).